The sequence spans 325 residues: Elongation factor P--(R)-beta-lysine ligase (325 aa).

76-78 provides a ligand contact to substrate; sequence SPE. ATP-binding positions include 100–102 and asparagine 109; that span reads RNE. Tyrosine 118 contacts substrate. 244–245 contacts ATP; that stretch reads EL. Residue glutamate 251 coordinates substrate. Glycine 300 lines the ATP pocket.

It belongs to the class-II aminoacyl-tRNA synthetase family. EpmA subfamily. As to quaternary structure, homodimer.

The catalysed reaction is D-beta-lysine + L-lysyl-[protein] + ATP = N(6)-((3R)-3,6-diaminohexanoyl)-L-lysyl-[protein] + AMP + diphosphate + H(+). Its function is as follows. With EpmB is involved in the beta-lysylation step of the post-translational modification of translation elongation factor P (EF-P). Catalyzes the ATP-dependent activation of (R)-beta-lysine produced by EpmB, forming a lysyl-adenylate, from which the beta-lysyl moiety is then transferred to the epsilon-amino group of a conserved specific lysine residue in EF-P. This is Elongation factor P--(R)-beta-lysine ligase from Photorhabdus laumondii subsp. laumondii (strain DSM 15139 / CIP 105565 / TT01) (Photorhabdus luminescens subsp. laumondii).